We begin with the raw amino-acid sequence, 373 residues long: Indole glucosinolate O-methyltransferase 3 (373 aa).

5 residues coordinate S-adenosyl-L-homocysteine: Gly217, Asp240, Asp260, Met261, and Lys274. The active-site Proton acceptor is His278.

This sequence belongs to the class I-like SAM-binding methyltransferase superfamily. Cation-independent O-methyltransferase family.

It functions in the pathway secondary metabolite biosynthesis. Involved in indole glucosinolate biosynthesis. Catalyzes methoxylation reactions of the glucosinolate indole ring. Converts the hydroxy intermediates 4-hydroxy-indol-3-yl-methylglucosinolate (4OH-I3M) and 1-hydroxy-indol-3-yl-methylglucosinolate (1OH-I3M) to 4-methoxy-indol-3-yl-methylglucosinolate (4MO-I3M) and 1-methoxy-indol-3-yl-methylglucosinolate(1MO-I3M), respectively. This chain is Indole glucosinolate O-methyltransferase 3, found in Arabidopsis thaliana (Mouse-ear cress).